A 434-amino-acid polypeptide reads, in one-letter code: Histidine--tRNA ligase (434 aa).

Positions 412–434 (DQTTVPVEAFPGDHDAPTYEDVV) are disordered.

This sequence belongs to the class-II aminoacyl-tRNA synthetase family.

The protein localises to the cytoplasm. It catalyses the reaction tRNA(His) + L-histidine + ATP = L-histidyl-tRNA(His) + AMP + diphosphate + H(+). In Haloquadratum walsbyi (strain DSM 16790 / HBSQ001), this protein is Histidine--tRNA ligase.